A 487-amino-acid polypeptide reads, in one-letter code: MAGSNTLSSSEHGDDPRGHSYSIHIQTRGTTLDKYPAKQHARNVARQLGLTDGLIYLMSQSTRTLEDSDQPQPFRQRRYFFYLSGVDEPDCHLTFDIKSDILTLYVPHYDLRKAIWVGPTLRPSEAMMRYDLNAAKTYDELSKNIRTWASKRMSPVIYILHEGQKPNINAHFLAFNHEDLLPAMDACREIKDEHEIDLIRRANEISASAHIEVLLGIRNMQNEAEIHGKFLDTCVSQGARNQSYEIIAASGENAAILHYTKNNEPLDDRQLVCLDAGAEWNCYASDVTRTFPRRPYWPSCESANIYSVVQRMQEECINGLKEGVRYLDLHILAHRIAIEELLSLGILKGGSTEEILQSGASLVFFPHGLGHHVGLEVHDVSPTPLMAFSLDKYKGLPLLSCRPPCTLSAPYLKAGMVVTVEPGIYFSRPALKDARRKPLSKYIDMDVVQKYIPVGGVRIEDDVLVTRDGFENLTKAPKGREMLKTIR.

A compositionally biased stretch (polar residues) spans 1–10; sequence MAGSNTLSSS. The disordered stretch occupies residues 1–22; that stretch reads MAGSNTLSSSEHGDDPRGHSYS. Aspartate 275, aspartate 286, glutamate 421, and glutamate 460 together coordinate Mn(2+).

This sequence belongs to the peptidase M24B family. The cofactor is Mn(2+).

The catalysed reaction is Release of any N-terminal amino acid, including proline, that is linked to proline, even from a dipeptide or tripeptide.. In terms of biological role, catalyzes the removal of a penultimate prolyl residue from the N-termini of peptides. In Coccidioides posadasii (strain RMSCC 757 / Silveira) (Valley fever fungus), this protein is Probable Xaa-Pro aminopeptidase CPSG_02684.